Reading from the N-terminus, the 85-residue chain is UPF0181 protein YPTS_1774 (85 aa).

A compositionally biased stretch (basic and acidic residues) spans 57-72; the sequence is DHDFDEHTESDYRRDD. The tract at residues 57–85 is disordered; that stretch reads DHDFDEHTESDYRRDDEPDADDIEDLYEG. A compositionally biased stretch (acidic residues) spans 73–85; sequence EPDADDIEDLYEG.

Belongs to the UPF0181 family.

The polypeptide is UPF0181 protein YPTS_1774 (Yersinia pseudotuberculosis serotype IB (strain PB1/+)).